We begin with the raw amino-acid sequence, 737 residues long: tRNA (guanine(27)-N(2))-dimethyltransferase (737 aa).

Over residues 1–10 (MENMAEEELL) the composition is skewed to acidic residues. Residues 1–65 (MENMAEEELL…ASAPVPAPAL (65 aa)) are disordered. Residues 17 to 49 (VVQVPVPTPTPDSARVPAPAPDSAPVSASTPAP) show a composition bias toward low complexity. Position 24 is a phosphothreonine (T24). Residues 50 to 62 (ASAPTPASAPVPA) show a composition bias toward pro residues. S72 bears the Phosphoserine mark. Positions 141-145 (HKLHR) match the Nucleolar localization signal motif. The C2H2-type zinc finger occupies 190–212 (YHCIICSATITRRTDMLGHVRRH). In terms of domain architecture, Trm1 methyltransferase spans 233 to 692 (EILKEADTDV…APLMQFKSIL (460 aa)). Residues R266, D313, D363, and A364 each contribute to the S-adenosyl-L-methionine site. Positions 494, 497, 519, and 521 each coordinate Zn(2+). K589 participates in a covalent cross-link: Glycyl lysine isopeptide (Lys-Gly) (interchain with G-Cter in SUMO2). Position 616 is a phosphoserine (S616).

Belongs to the class I-like SAM-binding methyltransferase superfamily. Trm1 family.

It localises to the nucleus. It is found in the nucleolus. The catalysed reaction is guanosine(27) in tRNA(Tyr) + 2 S-adenosyl-L-methionine = N(2)-dimethylguanosine(27) in tRNA(Tyr) + 2 S-adenosyl-L-homocysteine + 2 H(+). Specifically dimethylates a single guanine residue at position 27 of tRNA(Tyr) using S-adenosyl-L-methionine as donor of the methyl groups. Dimethylation at position 27 of tRNA(Tyr) is required for efficient translation of tyrosine codons. Also required to maintain 3-(3-amino-3-carboxypropyl)uridine (acp3U) in the D-loop of several cytoplasmic tRNAs. This is tRNA (guanine(27)-N(2))-dimethyltransferase (TRMT1L) from Bos taurus (Bovine).